Reading from the N-terminus, the 434-residue chain is Protein translocase subunit SecY (434 aa).

The next 10 helical transmembrane spans lie at 19-39 (LFTL…IPGI), 73-93 (IFML…LLVY), 117-137 (YLTI…AKGI), 148-168 (YIFV…WFGE), 179-199 (TSLI…FNLF), 209-229 (VNPV…ILII), 264-284 (VLPV…LSGF), 300-320 (PNGF…TYFY), 362-382 (FSGS…QNIF), and 391-411 (IMGG…LIHI).

It belongs to the SecY/SEC61-alpha family. As to quaternary structure, component of the Sec protein translocase complex. Heterotrimer consisting of SecY, SecE and SecG subunits. The heterotrimers can form oligomers, although 1 heterotrimer is thought to be able to translocate proteins. Interacts with the ribosome. Interacts with SecDF, and other proteins may be involved. Interacts with SecA.

It localises to the cell inner membrane. The central subunit of the protein translocation channel SecYEG. Consists of two halves formed by TMs 1-5 and 6-10. These two domains form a lateral gate at the front which open onto the bilayer between TMs 2 and 7, and are clamped together by SecE at the back. The channel is closed by both a pore ring composed of hydrophobic SecY resides and a short helix (helix 2A) on the extracellular side of the membrane which forms a plug. The plug probably moves laterally to allow the channel to open. The ring and the pore may move independently. The chain is Protein translocase subunit SecY from Borreliella burgdorferi (strain ATCC 35210 / DSM 4680 / CIP 102532 / B31) (Borrelia burgdorferi).